The sequence spans 152 residues: MQIWVDADACPNVIKEVLFRAADRTGMMVTLVANQPLKTPPSKFIRTLQVASGFDVADNEIVQRVEKNDLVITADIPLAAEVIEKGGIALNPRGERYTPDTIRERLNMRDFMDTMRASGIQTGGPNTLNQRDRQQFANELDKWLQQTIKAQV.

Belongs to the UPF0178 family.

The polypeptide is UPF0178 protein YE1167 (Yersinia enterocolitica serotype O:8 / biotype 1B (strain NCTC 13174 / 8081)).